We begin with the raw amino-acid sequence, 364 residues long: Acetylserotonin O-methyltransferase 1 (364 aa).

Residues Gly-208, Asp-231, Asp-251, and Lys-265 each contribute to the S-adenosyl-L-homocysteine site. The Proton acceptor role is filled by His-269. Residues Glu-300 and Glu-330 contribute to the active site.

The protein belongs to the class I-like SAM-binding methyltransferase superfamily. Cation-independent O-methyltransferase family. Homodimer. In terms of tissue distribution, expressed in leaves, stems and flowers.

Its subcellular location is the cytoplasm. It catalyses the reaction N-acetylserotonin + S-adenosyl-L-methionine = melatonin + S-adenosyl-L-homocysteine + H(+). It functions in the pathway aromatic compound metabolism; melatonin biosynthesis; melatonin from serotonin: step 1/2. Its function is as follows. Methyltransferase which catalyzes the transfer of a methyl group onto N-acetylserotonin, producing melatonin (N-acetyl-5-methoxytryptamine). The protein is Acetylserotonin O-methyltransferase 1 of Oryza sativa subsp. japonica (Rice).